Reading from the N-terminus, the 153-residue chain is 3-hydroxyacyl-[acyl-carrier-protein] dehydratase FabZ (153 aa).

His57 is a catalytic residue.

Belongs to the thioester dehydratase family. FabZ subfamily.

Its subcellular location is the cytoplasm. It carries out the reaction a (3R)-hydroxyacyl-[ACP] = a (2E)-enoyl-[ACP] + H2O. Involved in unsaturated fatty acids biosynthesis. Catalyzes the dehydration of short chain beta-hydroxyacyl-ACPs and long chain saturated and unsaturated beta-hydroxyacyl-ACPs. The chain is 3-hydroxyacyl-[acyl-carrier-protein] dehydratase FabZ from Xanthomonas oryzae pv. oryzae (strain MAFF 311018).